Reading from the N-terminus, the 434-residue chain is Glutamyl-tRNA reductase (434 aa).

Residues 49–52 (TCNR), Ser109, 114–116 (EPQ), and Gln120 each bind substrate. Cys50 serves as the catalytic Nucleophile. 189–194 (GAGEMC) provides a ligand contact to NADP(+).

It belongs to the glutamyl-tRNA reductase family. As to quaternary structure, homodimer.

It catalyses the reaction (S)-4-amino-5-oxopentanoate + tRNA(Glu) + NADP(+) = L-glutamyl-tRNA(Glu) + NADPH + H(+). It functions in the pathway porphyrin-containing compound metabolism; protoporphyrin-IX biosynthesis; 5-aminolevulinate from L-glutamyl-tRNA(Glu): step 1/2. Catalyzes the NADPH-dependent reduction of glutamyl-tRNA(Glu) to glutamate 1-semialdehyde (GSA). The sequence is that of Glutamyl-tRNA reductase from Geotalea uraniireducens (strain Rf4) (Geobacter uraniireducens).